The following is a 130-amino-acid chain: Small ribosomal subunit protein uS11 (130 aa).

Belongs to the universal ribosomal protein uS11 family. In terms of assembly, part of the 30S ribosomal subunit. Interacts with proteins S7 and S18. Binds to IF-3.

Functionally, located on the platform of the 30S subunit, it bridges several disparate RNA helices of the 16S rRNA. Forms part of the Shine-Dalgarno cleft in the 70S ribosome. In Campylobacter jejuni subsp. jejuni serotype O:6 (strain 81116 / NCTC 11828), this protein is Small ribosomal subunit protein uS11.